A 377-amino-acid chain; its full sequence is Guanine nucleotide-binding protein subunit beta-2 (377 aa).

WD repeat units lie at residues 63–93 (GHTG…IVWN), 105–135 (LPCA…SIFN), 154–185 (GHKG…VLWD), 202–233 (GHTA…RLWD), 246–276 (GHEG…RLFD), 293–323 (GDIP…YVWD), and 339–369 (SHEG…KIWA).

The protein belongs to the WD repeat G protein beta family. In terms of assembly, g proteins are composed of 3 units, alpha, beta and gamma.

Guanine nucleotide-binding proteins (G proteins) are involved as a modulator or transducer in various transmembrane signaling systems. The beta and gamma chains are required for the GTPase activity, for replacement of GDP by GTP, and for G protein-effector interaction. This is Guanine nucleotide-binding protein subunit beta-2 from Nicotiana tabacum (Common tobacco).